The sequence spans 199 residues: Probable thymidylate kinase (199 aa).

Residue 7-14 (GLDGSGKT) participates in ATP binding.

This sequence belongs to the thymidylate kinase family.

It catalyses the reaction dTMP + ATP = dTDP + ADP. The sequence is that of Probable thymidylate kinase from Halobacterium salinarum (strain ATCC 29341 / DSM 671 / R1).